A 486-amino-acid chain; its full sequence is Probable peptidoglycan glycosyltransferase FtsW (486 aa).

The Cytoplasmic portion of the chain corresponds to 1–50 (MAGAARDRAFLDHFGGAGADRPCHVEGALMNDMSRQATRLDAIGGRYDPW). A helical membrane pass occupies residues 51-71 (LLGAAVTLASLGVVMVASSSI). Topologically, residues 72 to 77 (ELEASP) are periplasmic. Residues 78–98 (FYYLTRHLLFLGGGIALAFWA) form a helical membrane-spanning segment. Residues 99–112 (MRTELKTIEQHNQM) lie on the Cytoplasmic side of the membrane. The chain crosses the membrane as a helical span at residues 113–133 (LLLACFVLLVVVFVPGLGSTV). Residues 134-141 (NGAKRWIN) are Periplasmic-facing. A helical transmembrane segment spans residues 142–162 (LGVSRFQVVESVKVFYIIWLA). The Cytoplasmic portion of the chain corresponds to 163–174 (SYLVRFRDEVNA). The chain crosses the membrane as a helical span at residues 175–195 (TWQAMLKPVFVVGLLVGLLLL). At 196-199 (QPDF) the chain is on the periplasmic side. The chain crosses the membrane as a helical span at residues 200-220 (GSSMLLLSVTACMLVLGGAPI). At 221–222 (GR) the chain is on the cytoplasmic side. The helical transmembrane segment at 223-243 (IILPILLLLPALVALVIFEPY) threads the bilayer. The Periplasmic portion of the chain corresponds to 244-298 (RMRRVTSFMDPWVDQLGSGYQLSNALMAIGRGQWTGVGLGASVQKLNYLPESHTD). The chain crosses the membrane as a helical span at residues 299–319 (FIFSVIAEELGFVGVCGVIGL). The Cytoplasmic segment spans residues 320–342 (YALLVGRAFWLGMRCVEMKRHFS). Residues 343 to 363 (GYIAFGIGLWIAMQSFVSIGV) form a helical membrane-spanning segment. Residues 364–374 (NLGILPTKGLT) lie on the Periplasmic side of the membrane. Residues 375–395 (LPLISSGGSSVLMTCLAMGVL) traverse the membrane as a helical segment. Residues 396–486 (LRVSYEADRA…RVEPTFGRIA (91 aa)) lie on the Cytoplasmic side of the membrane.

Belongs to the SEDS family. FtsW subfamily.

Its subcellular location is the cell inner membrane. It catalyses the reaction [GlcNAc-(1-&gt;4)-Mur2Ac(oyl-L-Ala-gamma-D-Glu-L-Lys-D-Ala-D-Ala)](n)-di-trans,octa-cis-undecaprenyl diphosphate + beta-D-GlcNAc-(1-&gt;4)-Mur2Ac(oyl-L-Ala-gamma-D-Glu-L-Lys-D-Ala-D-Ala)-di-trans,octa-cis-undecaprenyl diphosphate = [GlcNAc-(1-&gt;4)-Mur2Ac(oyl-L-Ala-gamma-D-Glu-L-Lys-D-Ala-D-Ala)](n+1)-di-trans,octa-cis-undecaprenyl diphosphate + di-trans,octa-cis-undecaprenyl diphosphate + H(+). It participates in cell wall biogenesis; peptidoglycan biosynthesis. Functionally, peptidoglycan polymerase that is essential for cell division. The chain is Probable peptidoglycan glycosyltransferase FtsW from Xanthomonas oryzae pv. oryzae (strain KACC10331 / KXO85).